Reading from the N-terminus, the 555-residue chain is CTP synthase (555 aa).

An amidoligase domain region spans residues 1–270 (MTKFVFVTGG…DGLICDKLRL (270 aa)). Serine 13 is a CTP binding site. UTP is bound at residue serine 13. ATP-binding positions include 14–19 (SLGKGI) and aspartate 71. Residues aspartate 71 and glutamate 144 each contribute to the Mg(2+) site. CTP contacts are provided by residues 151-153 (DIE), 191-196 (KTKPTQ), and lysine 227. UTP contacts are provided by residues 191–196 (KTKPTQ) and lysine 227. In terms of domain architecture, Glutamine amidotransferase type-1 spans 295–547 (NIVMVGKYVE…IKAALDHQAA (253 aa)). Glycine 356 lines the L-glutamine pocket. Catalysis depends on cysteine 383, which acts as the Nucleophile; for glutamine hydrolysis. Residues 384–387 (LGMQ), glutamate 407, and arginine 473 contribute to the L-glutamine site. Residues histidine 520 and glutamate 522 contribute to the active site.

This sequence belongs to the CTP synthase family. As to quaternary structure, homotetramer.

It catalyses the reaction UTP + L-glutamine + ATP + H2O = CTP + L-glutamate + ADP + phosphate + 2 H(+). The enzyme catalyses L-glutamine + H2O = L-glutamate + NH4(+). It carries out the reaction UTP + NH4(+) + ATP = CTP + ADP + phosphate + 2 H(+). It functions in the pathway pyrimidine metabolism; CTP biosynthesis via de novo pathway; CTP from UDP: step 2/2. Its activity is regulated as follows. Allosterically activated by GTP, when glutamine is the substrate; GTP has no effect on the reaction when ammonia is the substrate. The allosteric effector GTP functions by stabilizing the protein conformation that binds the tetrahedral intermediate(s) formed during glutamine hydrolysis. Inhibited by the product CTP, via allosteric rather than competitive inhibition. In terms of biological role, catalyzes the ATP-dependent amination of UTP to CTP with either L-glutamine or ammonia as the source of nitrogen. Regulates intracellular CTP levels through interactions with the four ribonucleotide triphosphates. In Albidiferax ferrireducens (strain ATCC BAA-621 / DSM 15236 / T118) (Rhodoferax ferrireducens), this protein is CTP synthase.